The following is a 332-amino-acid chain: Cytoskeleton protein RodZ (332 aa).

The Cytoplasmic segment spans residues 1–111; the sequence is MNTETTQDTT…LKKSRKKRDG (111 aa). An HTH cro/C1-type domain is found at 19–71; it reads LREARERLGLTQQTIAERLCLKITTVRDIEDGTTPADLAPTFLRGYIRSYAKL. A DNA-binding region (H-T-H motif) is located at residues 30–49; sequence QQTIAERLCLKITTVRDIED. The helical; Signal-anchor for type II membrane protein transmembrane segment at 112-132 threads the bilayer; it reads WLMIITWLVVLVVLGLTGAWW. Residues 133-332 are Periplasmic-facing; that stretch reads WQNHQAQQAE…QVARLTLTAE (200 aa). The segment at 149–225 is disordered; sequence HASSMQSQTE…PSQANATQSQ (77 aa). Polar residues-rich tracts occupy residues 151-160 and 168-182; these read SSMQSQTEGQ and SAPQ…AATP. Positions 190–225 are enriched in low complexity; that stretch reads SATIAATPSTPPSSTTASSAAPSSQSPSQANATQSQ.

This sequence belongs to the RodZ family.

It is found in the cell inner membrane. Cytoskeletal protein that is involved in cell-shape control through regulation of the length of the long axis. The sequence is that of Cytoskeleton protein RodZ from Pectobacterium atrosepticum (strain SCRI 1043 / ATCC BAA-672) (Erwinia carotovora subsp. atroseptica).